The primary structure comprises 375 residues: GTPase HflX (375 aa).

In terms of domain architecture, Hflx-type G spans 194 to 371; sequence PHIAIVGYAS…RIATLLAGTK (178 aa). GTP is bound by residues 200-207, 225-229, 246-249, 314-317, and 349-351; these read GYASAGKT, FTTIT, DTVG, NKID, and SAK. Residues threonine 207 and threonine 227 each coordinate Mg(2+).

It belongs to the TRAFAC class OBG-HflX-like GTPase superfamily. HflX GTPase family. Monomer. Associates with the 50S ribosomal subunit. It depends on Mg(2+) as a cofactor.

Its subcellular location is the cytoplasm. Its function is as follows. GTPase that associates with the 50S ribosomal subunit and may have a role during protein synthesis or ribosome biogenesis. This chain is GTPase HflX, found in Hyperthermus butylicus (strain DSM 5456 / JCM 9403 / PLM1-5).